We begin with the raw amino-acid sequence, 441 residues long: Glutamate--tRNA ligase 1 (441 aa).

Residues 8 to 18 carry the 'HIGH' region motif; the sequence is PSPTGYIHIGN. The short motif at 239 to 243 is the 'KMSKS' region element; the sequence is ALSKR. Residue K242 coordinates ATP.

The protein belongs to the class-I aminoacyl-tRNA synthetase family. Glutamate--tRNA ligase type 1 subfamily. As to quaternary structure, monomer.

Its subcellular location is the cytoplasm. The catalysed reaction is tRNA(Glu) + L-glutamate + ATP = L-glutamyl-tRNA(Glu) + AMP + diphosphate. Its function is as follows. Catalyzes the attachment of glutamate to tRNA(Glu) in a two-step reaction: glutamate is first activated by ATP to form Glu-AMP and then transferred to the acceptor end of tRNA(Glu). This Roseobacter denitrificans (strain ATCC 33942 / OCh 114) (Erythrobacter sp. (strain OCh 114)) protein is Glutamate--tRNA ligase 1.